A 556-amino-acid polypeptide reads, in one-letter code: Protein F37C4.5 (556 aa).

Position 2 is an N-acetylalanine (Ala-2).

In Caenorhabditis elegans, this protein is Protein F37C4.5.